Here is a 473-residue protein sequence, read N- to C-terminus: Mitochondrial distribution and morphology protein 10 (473 aa).

Belongs to the MDM10 family. As to quaternary structure, component of the ER-mitochondria encounter structure (ERMES) or MDM complex, composed of MMM1, MDM10, MDM12 and MDM34. Associates with the mitochondrial outer membrane sorting assembly machinery SAM(core) complex.

The protein resides in the mitochondrion outer membrane. Its function is as follows. Component of the ERMES/MDM complex, which serves as a molecular tether to connect the endoplasmic reticulum and mitochondria. Components of this complex are involved in the control of mitochondrial shape and protein biogenesis and may function in phospholipid exchange. MDM10 is involved in the late assembly steps of the general translocase of the mitochondrial outer membrane (TOM complex). Functions in the TOM40-specific route of the assembly of outer membrane beta-barrel proteins, including the association of TOM40 with the receptor TOM22 and small TOM proteins. Can associate with the SAM(core) complex as well as the MDM12-MMM1 complex, both involved in late steps of the major beta-barrel assembly pathway, that is responsible for biogenesis of all outer membrane beta-barrel proteins. May act as a switch that shuttles between both complexes and channels precursor proteins into the TOM40-specific pathway. Plays a role in mitochondrial morphology and in the inheritance of mitochondria. This Candida albicans (strain WO-1) (Yeast) protein is Mitochondrial distribution and morphology protein 10.